The primary structure comprises 341 residues: NADH-quinone oxidoreductase subunit H 2 (341 aa).

The next 8 helical transmembrane spans lie at Ile-13–Ile-33, Gly-82–Ile-102, Val-115–Gly-135, Ile-161–Val-181, Met-190–Leu-210, Tyr-248–Pro-268, Trp-277–Met-297, and Val-317–Gly-337.

The protein belongs to the complex I subunit 1 family. NDH-1 is composed of 14 different subunits. Subunits NuoA, H, J, K, L, M, N constitute the membrane sector of the complex.

The protein localises to the cell inner membrane. The catalysed reaction is a quinone + NADH + 5 H(+)(in) = a quinol + NAD(+) + 4 H(+)(out). NDH-1 shuttles electrons from NADH, via FMN and iron-sulfur (Fe-S) centers, to quinones in the respiratory chain. The immediate electron acceptor for the enzyme in this species is believed to be ubiquinone. Couples the redox reaction to proton translocation (for every two electrons transferred, four hydrogen ions are translocated across the cytoplasmic membrane), and thus conserves the redox energy in a proton gradient. This subunit may bind ubiquinone. The protein is NADH-quinone oxidoreductase subunit H 2 of Rhodopseudomonas palustris (strain BisB5).